A 538-amino-acid chain; its full sequence is Putative outer membrane porin BglH (538 aa).

Positions 1 to 25 (MFRRNLITSAILLMAPLAFSAQSLA) are cleaved as a signal peptide. Positions 52–82 (KDEEKKKYTPATVNRSVSTNDQGYAANPFPT) are disordered. The span at 62 to 73 (ATVNRSVSTNDQ) shows a compositional bias: polar residues.

It belongs to the porin LamB (TC 1.B.3) family.

The protein resides in the cell outer membrane. Its function is as follows. May be a sugar porin with a broad carbohydrate specificity. The protein is Putative outer membrane porin BglH (bglH) of Escherichia coli O139:H28 (strain E24377A / ETEC).